Here is a 663-residue protein sequence, read N- to C-terminus: Methionine--tRNA ligase (663 aa).

A 'HIGH' region motif is present at residues 13-23 (PYTNGPCHLGH). The Zn(2+) site is built by C144, C147, C156, and C160. The short motif at 326–330 (KFSKS) is the 'KMSKS' region element. K329 contacts ATP. The 99-residue stretch at 565 to 663 (EFGKMKLIVG…QAVEPGTPIR (99 aa)) folds into the tRNA-binding domain.

This sequence belongs to the class-I aminoacyl-tRNA synthetase family. MetG type 1 subfamily. As to quaternary structure, homodimer. The cofactor is Zn(2+).

It is found in the cytoplasm. It catalyses the reaction tRNA(Met) + L-methionine + ATP = L-methionyl-tRNA(Met) + AMP + diphosphate. In terms of biological role, is required not only for elongation of protein synthesis but also for the initiation of all mRNA translation through initiator tRNA(fMet) aminoacylation. This Methanosphaerula palustris (strain ATCC BAA-1556 / DSM 19958 / E1-9c) protein is Methionine--tRNA ligase.